We begin with the raw amino-acid sequence, 188 residues long: MAMLLNQSQPPQGREGGGTQVGSLGPGIPVGQQQQQLGLQQQQQDFDPVQRYRMLIPQLKESLQNLMKIAAQNLVQNTNIDNGQKNADGLVQRFDKSLEEFYAICDQLELCLRLAYECLSQSYDSAKHSPTLVPTATKPDAVQTESLPYTQYLSMIKSQISCAKDIHNALLECSKKIMGKTPNTQGGL.

Polar residues predominate over residues 1–11 (MAMLLNQSQPP). Residues 1 to 27 (MAMLLNQSQPPQGREGGGTQVGSLGPG) form a disordered region.

It belongs to the Mediator complex subunit 29 family. In terms of assembly, component of the Mediator complex.

It is found in the nucleus. Functionally, component of the Mediator complex, a coactivator involved in the regulated transcription of nearly all RNA polymerase II-dependent genes. Mediator functions as a bridge to convey information from gene-specific regulatory proteins to the basal RNA polymerase II transcription machinery. Mediator is recruited to promoters by direct interactions with regulatory proteins and serves as a scaffold for the assembly of a functional preinitiation complex with RNA polymerase II and the general transcription factors. The chain is Mediator of RNA polymerase II transcription subunit 29 (med29) from Xenopus tropicalis (Western clawed frog).